The sequence spans 360 residues: S-adenosylmethionine:tRNA ribosyltransferase-isomerase (360 aa).

It belongs to the QueA family. As to quaternary structure, monomer.

Its subcellular location is the cytoplasm. The enzyme catalyses 7-aminomethyl-7-carbaguanosine(34) in tRNA + S-adenosyl-L-methionine = epoxyqueuosine(34) in tRNA + adenine + L-methionine + 2 H(+). It functions in the pathway tRNA modification; tRNA-queuosine biosynthesis. Its function is as follows. Transfers and isomerizes the ribose moiety from AdoMet to the 7-aminomethyl group of 7-deazaguanine (preQ1-tRNA) to give epoxyqueuosine (oQ-tRNA). The protein is S-adenosylmethionine:tRNA ribosyltransferase-isomerase of Rhizobium rhizogenes (strain K84 / ATCC BAA-868) (Agrobacterium radiobacter).